The primary structure comprises 514 residues: Phospholipase C D (514 aa).

The tat-type signal signal peptide spans 1-37 (MSQSHIGGVSRREFLAKVAAGGAGALMSFAGPVIEKA). Positions 492-514 (VPDPQIMPTQETTPTRGIPSGPC) are disordered.

This sequence belongs to the bacterial phospholipase C family. In terms of processing, predicted to be exported by the Tat system. The position of the signal peptide cleavage has not been experimentally proven.

The protein localises to the secreted. The protein resides in the cell wall. It catalyses the reaction a 1,2-diacyl-sn-glycero-3-phosphocholine + H2O = phosphocholine + a 1,2-diacyl-sn-glycerol + H(+). Involved in virulence. Induces cytotoxic effects on mouse macrophage cell lines, via direct or indirect enzymatic hydrolysis of cell membrane phospholipids. Hydrolyzes phosphatidylcholine. In Mycobacterium tuberculosis (strain CDC 1551 / Oshkosh), this protein is Phospholipase C D.